A 256-amino-acid polypeptide reads, in one-letter code: Acetylglutamate kinase (256 aa).

Substrate is bound by residues 40–41, Arg62, and Asn153; that span reads GG.

Belongs to the acetylglutamate kinase family. ArgB subfamily.

It localises to the cytoplasm. The enzyme catalyses N-acetyl-L-glutamate + ATP = N-acetyl-L-glutamyl 5-phosphate + ADP. It participates in amino-acid biosynthesis; L-arginine biosynthesis; N(2)-acetyl-L-ornithine from L-glutamate: step 2/4. In terms of biological role, catalyzes the ATP-dependent phosphorylation of N-acetyl-L-glutamate. This chain is Acetylglutamate kinase, found in Bacillus cytotoxicus (strain DSM 22905 / CIP 110041 / 391-98 / NVH 391-98).